Here is a 128-residue protein sequence, read N- to C-terminus: Fluoride-specific ion channel FluC (128 aa).

Transmembrane regions (helical) follow at residues 5–25 (IVAIFVGAGLGAVLRWFLGLA), 35–55 (LGTLAANLLGGYAIGIAAVVF), 67–87 (LFVITGFLGGLTTFSTYSVEV), and 96–116 (FGWAFAVAVLHLTGSFTLTAL). Gly-75 and Thr-78 together coordinate Na(+).

The protein belongs to the fluoride channel Fluc/FEX (TC 1.A.43) family.

It localises to the cell inner membrane. It catalyses the reaction fluoride(in) = fluoride(out). Na(+) is not transported, but it plays an essential structural role and its presence is essential for fluoride channel function. Functionally, fluoride-specific ion channel. Important for reducing fluoride concentration in the cell, thus reducing its toxicity. The chain is Fluoride-specific ion channel FluC from Burkholderia vietnamiensis (strain G4 / LMG 22486) (Burkholderia cepacia (strain R1808)).